We begin with the raw amino-acid sequence, 131 residues long: Small ribosomal subunit protein uS11 (131 aa).

Belongs to the universal ribosomal protein uS11 family. Part of the 30S ribosomal subunit. Interacts with proteins S7 and S18. Binds to IF-3.

In terms of biological role, located on the platform of the 30S subunit, it bridges several disparate RNA helices of the 16S rRNA. Forms part of the Shine-Dalgarno cleft in the 70S ribosome. The sequence is that of Small ribosomal subunit protein uS11 from Wolinella succinogenes (strain ATCC 29543 / DSM 1740 / CCUG 13145 / JCM 31913 / LMG 7466 / NCTC 11488 / FDC 602W) (Vibrio succinogenes).